The primary structure comprises 103 residues: N(4)-acetylcytidine amidohydrolase (103 aa).

The ASCH domain maps to 6–92 (TFFERFEPGI…VIQEIYPGLE (87 aa)). K20 (proton acceptor) is an active-site residue. T23 (nucleophile) is an active-site residue. E73 functions as the Proton donor in the catalytic mechanism.

This sequence belongs to the N(4)-acetylcytidine amidohydrolase family.

The catalysed reaction is N(4)-acetylcytidine + H2O = cytidine + acetate + H(+). It catalyses the reaction N(4)-acetyl-2'-deoxycytidine + H2O = 2'-deoxycytidine + acetate + H(+). It carries out the reaction N(4)-acetylcytosine + H2O = cytosine + acetate + H(+). Its function is as follows. Catalyzes the hydrolysis of N(4)-acetylcytidine (ac4C). This chain is N(4)-acetylcytidine amidohydrolase, found in Shewanella sp. (strain MR-7).